The primary structure comprises 227 residues: Ornithine decarboxylase antizyme 1 (227 aa).

The protein belongs to the ODC antizyme family. As to quaternary structure, interacts with ODC1 and thereby sterically blocks ODC homodimerization. Forms a ternary complex with PSMB4 and OAZ1 before PSMB4 is incorporated into the 20S proteasome. Interacts with AZIN2; this interaction disrupts the interaction between the antizyme and ODC1. Interacts with FAM171A1.

Functionally, ornithine decarboxylase (ODC) antizyme protein that negatively regulates ODC activity and intracellular polyamine biosynthesis and uptake in response to increased intracellular polyamine levels. Binds to ODC monomers, inhibiting the assembly of the functional ODC homodimer, and targets the monomers for ubiquitin-independent proteolytic destruction by the 26S proteasome. Triggers ODC degradation by inducing the exposure of a cryptic proteasome-interacting surface of ODC. Stabilizes AZIN2 by interfering with its ubiquitination. Also inhibits cellular uptake of polyamines by inactivating the polyamine uptake transporter. SMAD1/OAZ1/PSMB4 complex mediates the degradation of the CREBBP/EP300 repressor SNIP1. Involved in the translocation of AZIN2 from ER-Golgi intermediate compartment (ERGIC) to the cytosol. The polypeptide is Ornithine decarboxylase antizyme 1 (Oaz1) (Rattus norvegicus (Rat)).